The sequence spans 143 residues: D-aminoacyl-tRNA deacylase (143 aa).

Positions 135-136 match the Gly-cisPro motif, important for rejection of L-amino acids motif; it reads GP.

The protein belongs to the DTD family. As to quaternary structure, homodimer.

Its subcellular location is the cytoplasm. It carries out the reaction glycyl-tRNA(Ala) + H2O = tRNA(Ala) + glycine + H(+). It catalyses the reaction a D-aminoacyl-tRNA + H2O = a tRNA + a D-alpha-amino acid + H(+). Its function is as follows. An aminoacyl-tRNA editing enzyme that deacylates mischarged D-aminoacyl-tRNAs. Also deacylates mischarged glycyl-tRNA(Ala), protecting cells against glycine mischarging by AlaRS. Acts via tRNA-based rather than protein-based catalysis; rejects L-amino acids rather than detecting D-amino acids in the active site. By recycling D-aminoacyl-tRNA to D-amino acids and free tRNA molecules, this enzyme counteracts the toxicity associated with the formation of D-aminoacyl-tRNA entities in vivo and helps enforce protein L-homochirality. The protein is D-aminoacyl-tRNA deacylase of Mycobacterium bovis (strain BCG / Pasteur 1173P2).